The chain runs to 215 residues: UPF0502 protein Shal_1801 (215 aa).

This sequence belongs to the UPF0502 family.

The sequence is that of UPF0502 protein Shal_1801 from Shewanella halifaxensis (strain HAW-EB4).